The sequence spans 89 residues: Small ribosomal subunit protein uS15 (89 aa).

This sequence belongs to the universal ribosomal protein uS15 family. As to quaternary structure, part of the 30S ribosomal subunit. Forms a bridge to the 50S subunit in the 70S ribosome, contacting the 23S rRNA.

One of the primary rRNA binding proteins, it binds directly to 16S rRNA where it helps nucleate assembly of the platform of the 30S subunit by binding and bridging several RNA helices of the 16S rRNA. In terms of biological role, forms an intersubunit bridge (bridge B4) with the 23S rRNA of the 50S subunit in the ribosome. The polypeptide is Small ribosomal subunit protein uS15 (Saccharopolyspora erythraea (strain ATCC 11635 / DSM 40517 / JCM 4748 / NBRC 13426 / NCIMB 8594 / NRRL 2338)).